The chain runs to 393 residues: Serine/threonine-protein kinase US3 homolog (393 aa).

The 286-residue stretch at 93-378 (FVILKTFTPG…AEVLLNHSVF (286 aa)) folds into the Protein kinase domain. Residues 99–107 (FTPGAEGFA) and Lys-122 contribute to the ATP site. Asp-206 serves as the catalytic Proton acceptor.

Belongs to the protein kinase superfamily. Ser/Thr protein kinase family. In terms of processing, phosphorylated by ORF47; this phosphorylation regulates subsequent phosphorylation of proteins 24 and 27 by ORF66. Autophosphorylated.

It localises to the host cytoplasm. The protein localises to the host nucleus. The enzyme catalyses L-seryl-[protein] + ATP = O-phospho-L-seryl-[protein] + ADP + H(+). It catalyses the reaction L-threonyl-[protein] + ATP = O-phospho-L-threonyl-[protein] + ADP + H(+). In terms of biological role, multifunctional serine/threonine kinase that plays a role in several processes including egress of virus particles from the nucleus, modulation of the actin cytoskeleton and inhibition of apoptosis. Phosphorylates proteins 24 and 27, two critical regulators of capsid budding from nucleus to endoplasmic reticulum, thereby facilitating virion egress. Modulates and redistributes host components of the nuclear envelope, including LMNA, emerin/EMD and the nuclear matrix protein MATR3. Phosphorylates envelope glycoprotein B (gB), probably to direct it to the cell surface. Promotes virus intracellular spread by restructuring host cell cytoskeleton. Blocks host apoptosis to extend cell survival and allow efficient viral replication. Promotes viral gene expression by phosphorylating host HDAC2 to reduce viral genome silencing. Down-regulates class I major histocompatibility complex (MHC-I) surface expression. Additionally, phosphorylates IE62 and targets it to the cytoplasm. The nuclear exclusion of IE62 enables the packaging of abundant levels of IE62 into virions. This chain is Serine/threonine-protein kinase US3 homolog (66), found in Varicella-zoster virus (strain Dumas) (HHV-3).